Reading from the N-terminus, the 364-residue chain is DNA replication and repair protein RecF (364 aa).

30 to 37 (GDNAQGKT) is an ATP binding site.

The protein belongs to the RecF family.

Its subcellular location is the cytoplasm. The RecF protein is involved in DNA metabolism; it is required for DNA replication and normal SOS inducibility. RecF binds preferentially to single-stranded, linear DNA. It also seems to bind ATP. The chain is DNA replication and repair protein RecF from Clostridium kluyveri (strain ATCC 8527 / DSM 555 / NBRC 12016 / NCIMB 10680 / K1).